A 262-amino-acid chain; its full sequence is Small ribosomal subunit protein eS1 (262 aa).

Residues 1–18 (MAVGKNKRISKGKKGSKK) are compositionally biased toward basic residues. The tract at residues 1–20 (MAVGKNKRISKGKKGSKKKT) is disordered.

This sequence belongs to the eukaryotic ribosomal protein eS1 family. Component of the small ribosomal subunit. Mature ribosomes consist of a small (40S) and a large (60S) subunit. The 40S subunit contains about 33 different proteins and 1 molecule of RNA (18S). The 60S subunit contains about 49 different proteins and 3 molecules of RNA (25S, 5.8S and 5S).

The protein localises to the cytoplasm. The polypeptide is Small ribosomal subunit protein eS1 (Oryza sativa subsp. japonica (Rice)).